Here is a 253-residue protein sequence, read N- to C-terminus: Aminoglycoside nucleotidyltransferase (4') (253 aa).

Residues 1–127 are N-terminal domain; that stretch reads MNGPIIMTRE…KVYQTAKSVE (127 aa). The ATP site is built by S39, R42, S49, D50, and E52. Mg(2+) contacts are provided by D50 and E52. The neomycin B site is built by E52 and E67. E67, K74, E76, E141, and E145 together coordinate kanamycin A. The segment at 128 to 241 is C-terminal domain; sequence AQTFHDAICA…NGIQEWTERH (114 aa). Residues E145, K149, and T187 each coordinate ATP. E145 provides a ligand contact to Mg(2+). The active-site Proton acceptor is E145.

Homodimer. Requires Mg(2+) as cofactor.

It carries out the reaction amikacin + ATP = 4'-adenylylamikacin + diphosphate. The enzyme catalyses kanamycin A + ATP = 4'-adenylylkanamycin A + diphosphate. The catalysed reaction is neomycin B + ATP = 4'-adenylylneomycin B + diphosphate. It catalyses the reaction paromomycin + ATP = 4'-adenylylparomomycin + diphosphate. It carries out the reaction ribostamycin + ATP = 4'-adenylylribostamycin + diphosphate. The enzyme catalyses tobramycin + ATP = 4'-adenylyltobramycin + diphosphate. The catalysed reaction is kanamycin A + CTP = 4'-cytidylylkanamycin A + diphosphate. It catalyses the reaction kanamycin A + GTP = 4'-guanylylkanamycin A + diphosphate. It carries out the reaction kanamycin A + ITP = 4'-inosinylylkanamycin A + diphosphate. The enzyme catalyses dTTP + kanamycin A = 4'-thymidylylkanamycin A + diphosphate. The catalysed reaction is kanamycin A + UTP = 4'-uridylylkanamycin A + diphosphate. It catalyses the reaction kanamycin A + dATP = 4'-(2'-deoxyadenylyl)kanamycin A + diphosphate. It carries out the reaction kanamycin A + dCTP = 4'-(2'-deoxycytidylyl)kanamycin A + diphosphate. The enzyme catalyses kanamycin A + dGTP = 4'-(2'-deoxyguanylyl)kanamycin A + diphosphate. The catalysed reaction is dUTP + kanamycin A = 4'-(2'-deoxyuridylyl)kanamycin A + diphosphate. It catalyses the reaction amikacin + GTP = 4'-guanylylamikacin + diphosphate. It carries out the reaction amikacin + ITP = 4'-inosinylylamikacin + diphosphate. The enzyme catalyses amikacin + CTP = 4'-cytidylylamikacin + diphosphate. The catalysed reaction is amikacin + UTP = 4'-uridylylamikacin + diphosphate. It catalyses the reaction amikacin + dTTP = 4'-thymidylylamikacin + diphosphate. In terms of biological role, inactivates aminoglycoside antibiotics such as kanamycin by catalyzing the transfer of a nucleotidyl group from a wide variety of nucleoside triphosphates ((d)ATP, (d)CTP, (d)GTP, ITP, TTP and (d)UTP) to the 4'-hydroxyl group of the aminoglycoside. In vitro, antibiotics without the 4'-hydroxyl but possessing a 4''-hydroxyl group (e.g. sisomicin and gentamicin) are also modifed but with poor specificity. The 3' position of the NTP ribose ring does not tolerate large substitutions (e.g. ddATP) and dNTPs and TTP are better substrates than their NTP counterparts. A short (2.35 Angstrom) hydrogen bond initially facilitates tight binding of the substrate (between Glu-52 and antibiotic) that is subsequently disrupted by the assembly of the active ternary complex. This enables the release of products post-catalysis, a 'catch and release' mechanism. This Staphylococcus aureus protein is Aminoglycoside nucleotidyltransferase (4') (knt).